We begin with the raw amino-acid sequence, 305 residues long: Tetraspanin-12 (305 aa).

The Cytoplasmic segment spans residues 1-12 (MAREDSVKCLRC). S-palmitoyl cysteine attachment occurs at residues Cys-9 and Cys-12. Residues 13-33 (LLYALNLLFWLMSISVLAVSA) traverse the membrane as a helical segment. The Extracellular portion of the chain corresponds to 34–59 (WMRDYLNNVLTLTAETRVEEAVILTY). Residues 60–80 (FPVVHPVMIAVCCFLIIVGML) traverse the membrane as a helical segment. The Cytoplasmic segment spans residues 81–89 (GYCGTVKRN). Cys-83 carries S-palmitoyl cysteine lipidation. The helical transmembrane segment at 90-110 (LLLLAWYFGSLLVIFCVELAC) threads the bilayer. Residues 111 to 224 (GVWTYEQEIM…RGTKQLQVLR (114 aa)) lie on the Extracellular side of the membrane. Residues 225 to 245 (FLGISIGVTQILAMILTITLL) form a helical membrane-spanning segment. Over 246 to 305 (WALYYDRREPGTDQMMALKNDTTQHLPCHSVELLKPSLSRIFEHTSMANSFNTHFEMEEL) the chain is Cytoplasmic.

The protein belongs to the tetraspanin (TM4SF) family. As to quaternary structure, component of a complex, at least composed of TSPAN12, FZD4 and norrin (NDP). Interacts (when palmitoylated) with ADAM10. Interacts with MMP14/MT1-MMP. Post-translationally, palmitoylated; required for interaction with ADAM10. The precise position of palmitoylated residues is unclear and occurs either on Cys-9, Cys-12 and/or Cys-83.

Its subcellular location is the cell membrane. Functionally, regulator of cell surface receptor signal transduction. Plays a central role in retinal vascularization by regulating norrin (NDP) signal transduction. Acts in concert with norrin (NDP) to promote FZD4 multimerization and subsequent activation of FZD4, leading to promote accumulation of beta-catenin (CTNNB1) and stimulate LEF/TCF-mediated transcriptional programs. Suprisingly, it only activates the norrin (NDP)-dependent activation of FZD4, while it does not activate the Wnt-dependent activation of FZD4, suggesting the existence of a Wnt-independent signaling that also promote accumulation the beta-catenin (CTNNB1). Acts as a regulator of membrane proteinases such as ADAM10 and MMP14/MT1-MMP. Activates ADAM10-dependent cleavage activity of amyloid precursor protein (APP). Activates MMP14/MT1-MMP-dependent cleavage activity. In Bos taurus (Bovine), this protein is Tetraspanin-12 (TSPAN12).